A 267-amino-acid polypeptide reads, in one-letter code: MLGANGAGKTTTFRMMLGLLEPTEGEMTWKGEKIDYSRTNVIGYLPEERGLYPKLKVRDQLIYLGRLKGMHKKDIIPEMRMWLERFKVTDYETKRIEELSKGNQQKIQFIASVIHRPELLILDEPFSGLDPVNAELLKEAVIDLKKKGTTIVFSSHRMDHVEELCQHLCILRHGTPVVKGELREIKRSFRNKFIVIEGERSFETLKNLPGVKKFQQKQGGVRLQVEDEEVAKVIFAEVAKSGYVRRFEVEEPSLQDIFIEKVGTAYA.

In terms of domain architecture, ABC transporter spans 2 to 198 (LGANGAGKTT…FRNKFIVIEG (197 aa)). Residue 3–10 (GANGAGKT) coordinates ATP.

It belongs to the ABC transporter superfamily.

This is an uncharacterized protein from Alkalihalophilus pseudofirmus (strain ATCC BAA-2126 / JCM 17055 / OF4) (Bacillus pseudofirmus).